The primary structure comprises 313 residues: D-alanine--D-alanine ligase (313 aa).

An ATP-grasp domain is found at 108-308; that stretch reads KLVWQQLGIP…YQELVVGVLA (201 aa). 138 to 193 is an ATP binding site; it reads VAKLGLPLFVKPASEGSSVAVIKVKSADALPAALIEAVKYDKIVVVEKSVEGGGEY. Positions 262, 275, and 277 each coordinate Mg(2+).

Belongs to the D-alanine--D-alanine ligase family. Mg(2+) serves as cofactor. Mn(2+) is required as a cofactor.

The protein localises to the cytoplasm. The catalysed reaction is 2 D-alanine + ATP = D-alanyl-D-alanine + ADP + phosphate + H(+). The protein operates within cell wall biogenesis; peptidoglycan biosynthesis. Its function is as follows. Cell wall formation. This Paraburkholderia phytofirmans (strain DSM 17436 / LMG 22146 / PsJN) (Burkholderia phytofirmans) protein is D-alanine--D-alanine ligase.